Reading from the N-terminus, the 94-residue chain is Pyrimidine/purine nucleoside phosphorylase (94 aa).

The protein belongs to the nucleoside phosphorylase PpnP family.

It carries out the reaction a purine D-ribonucleoside + phosphate = a purine nucleobase + alpha-D-ribose 1-phosphate. It catalyses the reaction adenosine + phosphate = alpha-D-ribose 1-phosphate + adenine. The catalysed reaction is cytidine + phosphate = cytosine + alpha-D-ribose 1-phosphate. The enzyme catalyses guanosine + phosphate = alpha-D-ribose 1-phosphate + guanine. It carries out the reaction inosine + phosphate = alpha-D-ribose 1-phosphate + hypoxanthine. It catalyses the reaction thymidine + phosphate = 2-deoxy-alpha-D-ribose 1-phosphate + thymine. The catalysed reaction is uridine + phosphate = alpha-D-ribose 1-phosphate + uracil. The enzyme catalyses xanthosine + phosphate = alpha-D-ribose 1-phosphate + xanthine. In terms of biological role, catalyzes the phosphorolysis of diverse nucleosides, yielding D-ribose 1-phosphate and the respective free bases. Can use uridine, adenosine, guanosine, cytidine, thymidine, inosine and xanthosine as substrates. Also catalyzes the reverse reactions. This is Pyrimidine/purine nucleoside phosphorylase from Salmonella paratyphi C (strain RKS4594).